The chain runs to 454 residues: Mannosylfructose-phosphate synthase (454 aa).

The protein belongs to the glycosyltransferase 1 family. It depends on Mg(2+) as a cofactor. Mn(2+) is required as a cofactor.

It catalyses the reaction beta-D-fructose 6-phosphate + GDP-alpha-D-mannose = beta-D-fructofuranosyl alpha-D-mannopyranoside 6(F)-phosphate + GDP + H(+). It functions in the pathway carbohydrate metabolism; mannosylfructose biosynthesis; beta-D-fructofuranosyl alpha-D-mannopyranoside from D-fructose 6-phosphate and GDP-alpha-D-mannose: step 1/2. The protein is Mannosylfructose-phosphate synthase of Agrobacterium fabrum (strain C58 / ATCC 33970) (Agrobacterium tumefaciens (strain C58)).